We begin with the raw amino-acid sequence, 155 residues long: RNA pyrophosphohydrolase (155 aa).

Positions 5-147 constitute a Nudix hydrolase domain; that stretch reads KYRPNVAAII…KRQVYRQVIA (143 aa). The Nudix box motif lies at 42–63; sequence GGIDEGETPLEALYRELLEEIG.

This sequence belongs to the Nudix hydrolase family. RppH subfamily. A divalent metal cation is required as a cofactor.

Functionally, accelerates the degradation of transcripts by removing pyrophosphate from the 5'-end of triphosphorylated RNA, leading to a more labile monophosphorylated state that can stimulate subsequent ribonuclease cleavage. In Helicobacter pylori (strain P12), this protein is RNA pyrophosphohydrolase.